The primary structure comprises 466 residues: Alpha-galacturonidase (466 aa).

11–78 (VKIAYIGGGS…GKWNYETANT (68 aa)) provides a ligand contact to NAD(+). N157 is a binding site for substrate. C179 provides a ligand contact to Mn(2+). The active-site Proton donor is H180. H216 contacts Mn(2+).

It belongs to the glycosyl hydrolase 4 family. Homotetramer. NAD(+) serves as cofactor. It depends on Mn(2+) as a cofactor.

The catalysed reaction is [(1-&gt;4)-alpha-D-galacturonosyl](n) + H2O = alpha-D-galacturonate + [(1-&gt;4)-alpha-D-galacturonosyl](n-1). Functionally, alpha-galacturonidase able to catalyze the hydrolysis of the chromogenic substrate p-nitrophenyl-alpha-D-galacturonic acid (pNPalphaGalUA). It is probable that alpha-1,4-di-galacturonate (GalUA(2)) is the naturally occurring substrate. This is Alpha-galacturonidase from Lachnoclostridium phytofermentans (strain ATCC 700394 / DSM 18823 / ISDg) (Clostridium phytofermentans).